Consider the following 447-residue polypeptide: UDP-glucosyl transferase 79T1 (447 aa).

His18 serves as the catalytic Proton acceptor. Catalysis depends on Asp116, which acts as the Charge relay. 6 residues coordinate UDP: Ser265, Trp323, Val324, His341, Thr346, and Glu349.

It belongs to the UDP-glycosyltransferase family. As to expression, mainly expressed in flowers, flower buds and young leaves, and, to a lesser extent, in old leaves, stems and roots.

It functions in the pathway secondary metabolite biosynthesis; terpenoid biosynthesis. Its function is as follows. Component of the oleanane-type triterpene saponins (e.g. saponarioside A and saponarioside B) biosynthetic pathway, leading to the production of natural products with detergent properties used as traditional sources of soap. A glycosyltransferase that mediates the conversion of QA-triF to QA-triFR via the elongation of the C-28 sugar chain with a deoxyhexose on the D-fucose moiety. This is UDP-glucosyl transferase 79T1 from Saponaria officinalis (Common soapwort).